The sequence spans 43 residues: Protein PsbN (43 aa).

A helical membrane pass occupies residues 5 to 27; the sequence is ALVAISISRLLVSFTGYALYTAF.

It belongs to the PsbN family.

The protein resides in the plastid. It localises to the chloroplast thylakoid membrane. May play a role in photosystem I and II biogenesis. This chain is Protein PsbN, found in Bowenia serrulata (Byfield fern).